A 448-amino-acid chain; its full sequence is Tubulin beta chain (448 aa).

Glutamine 11, glutamate 69, serine 138, glycine 142, threonine 143, glycine 144, asparagine 204, and asparagine 226 together coordinate GTP. Glutamate 69 is a Mg(2+) binding site.

The protein belongs to the tubulin family. In terms of assembly, dimer of alpha and beta chains. A typical microtubule is a hollow water-filled tube with an outer diameter of 25 nm and an inner diameter of 15 nM. Alpha-beta heterodimers associate head-to-tail to form protofilaments running lengthwise along the microtubule wall with the beta-tubulin subunit facing the microtubule plus end conferring a structural polarity. Microtubules usually have 13 protofilaments but different protofilament numbers can be found in some organisms and specialized cells. It depends on Mg(2+) as a cofactor.

It is found in the cytoplasm. The protein resides in the cytoskeleton. Functionally, tubulin is the major constituent of microtubules, a cylinder consisting of laterally associated linear protofilaments composed of alpha- and beta-tubulin heterodimers. Microtubules grow by the addition of GTP-tubulin dimers to the microtubule end, where a stabilizing cap forms. Below the cap, tubulin dimers are in GDP-bound state, owing to GTPase activity of alpha-tubulin. The chain is Tubulin beta chain (TUB1) from Melampsora lini (Rust fungus).